A 167-amino-acid polypeptide reads, in one-letter code: MLPMITGFMNYGQQTLRAARYIGQGFMITLSHTNRLPVTIQYPYEKLITSERFRGRIHFEFDKCIACEVCVRVCPIDLPVVDWKLETNIRKKRLLNYSIDFGICIFCGNCVEYCPTNCLSMTEEYEFSTYDRHELNYNQIALGRLPMSVIDDYTIRTILNSPQTKKG.

4Fe-4S ferredoxin-type domains lie at 55-84 (GRIH…VDWK) and 95-124 (LNYS…MTEE). [4Fe-4S] cluster-binding residues include Cys-64, Cys-67, Cys-70, Cys-74, Cys-104, Cys-107, Cys-110, and Cys-114.

Belongs to the complex I 23 kDa subunit family. NDH is composed of at least 16 different subunits, 5 of which are encoded in the nucleus. [4Fe-4S] cluster serves as cofactor.

It localises to the plastid. The protein localises to the chloroplast thylakoid membrane. It carries out the reaction a plastoquinone + NADH + (n+1) H(+)(in) = a plastoquinol + NAD(+) + n H(+)(out). The catalysed reaction is a plastoquinone + NADPH + (n+1) H(+)(in) = a plastoquinol + NADP(+) + n H(+)(out). Functionally, NDH shuttles electrons from NAD(P)H:plastoquinone, via FMN and iron-sulfur (Fe-S) centers, to quinones in the photosynthetic chain and possibly in a chloroplast respiratory chain. The immediate electron acceptor for the enzyme in this species is believed to be plastoquinone. Couples the redox reaction to proton translocation, and thus conserves the redox energy in a proton gradient. The sequence is that of NAD(P)H-quinone oxidoreductase subunit I, chloroplastic from Lepidium virginicum (Virginia pepperweed).